The sequence spans 147 residues: Hemoglobin subunit epsilon (147 aa).

Residues histidine 3–histidine 147 enclose the Globin domain. Phosphoserine occurs at positions 14 and 51. Histidine 64 and histidine 93 together coordinate heme b.

It belongs to the globin family. As to quaternary structure, heterotetramer of two alpha chains and two epsilon chains in early embryonic hemoglobin Gower-2; two zeta chains and two epsilon chains in early embryonic hemoglobin Gower-1. In terms of tissue distribution, red blood cells.

Functionally, the epsilon chain is a beta-type chain of early mammalian embryonic hemoglobin. The protein is Hemoglobin subunit epsilon (HBE1) of Saimiri boliviensis boliviensis (Bolivian squirrel monkey).